The chain runs to 36 residues: Pancreatic polypeptide (36 aa).

Tyr-36 is subject to Tyrosine amide.

The protein belongs to the NPY family.

It is found in the secreted. Functionally, hormone secreted by pancreatic cells that acts as a regulator of pancreatic and gastrointestinal functions probably by signaling through the G protein-coupled receptor NPY4R2. This Didelphis virginiana (North American opossum) protein is Pancreatic polypeptide (PPY).